Consider the following 78-residue polypeptide: Ferritin light chain (78 aa).

In terms of domain architecture, Ferritin-like diiron spans 1 to 59 (EAALHLEKGLNQALVDLHALGSARADPHLCDFLENHFLDEEVKLIKKMGDHLTNLRRLS).

The protein belongs to the ferritin family. In terms of assembly, oligomer of 24 subunits. There are two types of subunits: L (light) chain and H (heavy) chain. The major chain can be light or heavy, depending on the species and tissue type. The functional molecule forms a roughly spherical shell with a diameter of 12 nm and contains a central cavity into which the insoluble mineral iron core is deposited. Interacts with NCOA4.

The protein resides in the cytoplasmic vesicle. It is found in the autophagosome. The protein localises to the cytoplasm. Its subcellular location is the autolysosome. Its function is as follows. Stores iron in a soluble, non-toxic, readily available form. Important for iron homeostasis. Iron is taken up in the ferrous form and deposited as ferric hydroxides after oxidation. Also plays a role in delivery of iron to cells. Mediates iron uptake in capsule cells of the developing kidney. Delivery to lysosomes by the cargo receptor NCOA4 for autophagic degradation and release or iron. The protein is Ferritin light chain (FTL) of Sus scrofa (Pig).